A 139-amino-acid polypeptide reads, in one-letter code: uncharacterized protein (139 aa).

Positions 1–62 (MDDTDLQILS…NICYEKLNKH (62 aa)) constitute an HTH asnC-type domain. A DNA-binding region (H-T-H motif) is located at residues 20–39 (MVELGKLVGLSSPSAAERVR).

This is an uncharacterized protein from Bacillus subtilis (strain 168).